Consider the following 312-residue polypeptide: Glutathione synthetase (312 aa).

Residues 125 to 309 form the ATP-grasp domain; the sequence is KIFVTEFPDL…IAALFWDAVE (185 aa). 151-207 serves as a coordination point for ATP; it reads RREFGDIILKPLYGNGGAGVFHLADGDRNLTSLLEMFGQLFREPFIAQRYLKDVRAG. Mg(2+)-binding residues include E280 and N282.

Belongs to the prokaryotic GSH synthase family. The cofactor is Mg(2+). Mn(2+) is required as a cofactor.

The enzyme catalyses gamma-L-glutamyl-L-cysteine + glycine + ATP = glutathione + ADP + phosphate + H(+). Its pathway is sulfur metabolism; glutathione biosynthesis; glutathione from L-cysteine and L-glutamate: step 2/2. The chain is Glutathione synthetase from Brucella melitensis biotype 1 (strain ATCC 23456 / CCUG 17765 / NCTC 10094 / 16M).